The following is an 86-amino-acid chain: High affinity immunoglobulin epsilon receptor subunit gamma (86 aa).

The N-terminal stretch at 1 to 18 (MIPAVVLLLLLLVEQAAA) is a signal peptide. Over 19–23 (LGEPQ) the chain is Extracellular. A helical transmembrane segment spans residues 24-44 (LCYILDAILFLYGIVLTLLYC). The Cytoplasmic portion of the chain corresponds to 45–86 (RLKIQVRKAAIASYEKSDGVYTGLSTRNQETYETLKHEKPPQ). An ITAM domain is found at 54-82 (AIASYEKSDGVYTGLSTRNQETYETLKHE). Position 65 is a phosphotyrosine (Tyr65). At Ser69 the chain carries Phosphoserine. Tyr76 is subject to Phosphotyrosine. Residue Thr78 is modified to Phosphothreonine.

This sequence belongs to the CD3Z/FCER1G family. IgE Fc receptor is a tetramer of an alpha chain, a beta chain, and two disulfide linked gamma chains. Associates with FCGR1A; forms a functional signaling complex. The signaling subunit of immunoglobulin gamma (IgG) Fc receptor complex. As a homodimer or a heterodimer of CD247 and FCER1G, associates with the ligand binding subunit FCGR3A to form a functional receptor complex. Associates with CLEC6A. Interacts with CLEC4E. Interacts (via ITAM domain) with SYK (via SH2 domains); activates SYK, enabling integrin-mediated activation of neutrophils and macrophages. Interacts with CSF2RB and recruits SYK in response to IL3 stimulation; this interaction is direct. Interacts with CD300LH; the interaction may be indirect. Interacts with CD300LD. Interacts with TARM1.

The protein resides in the cell membrane. Adapter protein containing an immunoreceptor tyrosine-based activation motif (ITAM) that transduces activation signals from various immunoreceptors. As a component of the high-affinity immunoglobulin E (IgE) receptor, mediates allergic inflammatory signaling in mast cells. As a constitutive component of interleukin-3 receptor complex, selectively mediates interleukin 4/IL4 production by basophils priming T-cells toward effector T-helper 2 subset. Associates with pattern recognition receptors CLEC4D and CLEC4E to form a functional signaling complex in myeloid cells. Binding of mycobacterial trehalose 6,6'-dimycolate (TDM) to this receptor complex leads to phosphorylation of ITAM, triggering activation of SYK, CARD9 and NF-kappa-B, consequently driving maturation of antigen-presenting cells and shaping antigen-specific priming of T-cells toward effector T-helper 1 and T-helper 17 cell subtypes. May function cooperatively with other activating receptors. Functionally linked to integrin beta-2/ITGB2-mediated neutrophil activation. Also involved in integrin alpha-2/ITGA2-mediated platelet activation. This Macaca fascicularis (Crab-eating macaque) protein is High affinity immunoglobulin epsilon receptor subunit gamma (FCER1G).